The primary structure comprises 189 residues: Cell division protein SepF (189 aa).

The span at 152 to 163 (FQEEPSPSSVMN) shows a compositional bias: polar residues. The segment at 152–189 (FQEEPSPSSVMNKDNEGPVSESVMAPEPAWGASVPSAI) is disordered.

This sequence belongs to the SepF family. In terms of assembly, homodimer. Interacts with FtsZ.

Its subcellular location is the cytoplasm. Functionally, cell division protein that is part of the divisome complex and is recruited early to the Z-ring. Probably stimulates Z-ring formation, perhaps through the cross-linking of FtsZ protofilaments. Its function overlaps with FtsA. The chain is Cell division protein SepF from Prochlorococcus marinus (strain SARG / CCMP1375 / SS120).